The following is a 117-amino-acid chain: MMTNRRFRKPSAWRLLLLLLPLVVLLSMSSRRLPDEVMLHITPLHQGAPLPDGFYIYQRLNERGIAIKSITPENDSIIVRLSSPEQSGAAREILSTALPYAIVIAQRSNGTSPVTRS.

Over 1-11 the chain is Cytoplasmic; that stretch reads MMTNRRFRKPS. Residues 12 to 29 form a helical membrane-spanning segment; it reads AWRLLLLLLPLVVLLSMS. Residues 30–117 are Periplasmic-facing; it reads SRRLPDEVML…SNGTSPVTRS (88 aa).

This sequence belongs to the MzrA family. As to quaternary structure, interacts with EnvZ.

The protein localises to the cell inner membrane. Modulates the activity of the EnvZ/OmpR two-component regulatory system, probably by directly modulating EnvZ enzymatic activity and increasing stability of phosphorylated OmpR. The protein is Modulator protein MzrA of Dickeya dadantii (strain 3937) (Erwinia chrysanthemi (strain 3937)).